A 264-amino-acid polypeptide reads, in one-letter code: Elongator complex protein 6 (264 aa).

The protein belongs to the ELP6 family. Component of the elongator complex.

It localises to the cytoplasm. The protein localises to the nucleus. It participates in tRNA modification; 5-methoxycarbonylmethyl-2-thiouridine-tRNA biosynthesis. Functionally, component of the elongator complex which is required for multiple tRNA modifications, including mcm5U (5-methoxycarbonylmethyl uridine), mcm5s2U (5-methoxycarbonylmethyl-2-thiouridine), and ncm5U (5-carbamoylmethyl uridine). The elongator complex catalyzes formation of carboxymethyluridine in the wobble base at position 34 in tRNAs. The chain is Elongator complex protein 6 (elp6) from Danio rerio (Zebrafish).